We begin with the raw amino-acid sequence, 301 residues long: 4-diphosphocytidyl-2-C-methyl-D-erythritol kinase (301 aa).

Lys18 is an active-site residue. Residue 103-113 (PVAAGIGGGSA) participates in ATP binding. Residue Asp145 is part of the active site.

Belongs to the GHMP kinase family. IspE subfamily.

It carries out the reaction 4-CDP-2-C-methyl-D-erythritol + ATP = 4-CDP-2-C-methyl-D-erythritol 2-phosphate + ADP + H(+). It participates in isoprenoid biosynthesis; isopentenyl diphosphate biosynthesis via DXP pathway; isopentenyl diphosphate from 1-deoxy-D-xylulose 5-phosphate: step 3/6. Functionally, catalyzes the phosphorylation of the position 2 hydroxy group of 4-diphosphocytidyl-2C-methyl-D-erythritol. This Bradyrhizobium sp. (strain BTAi1 / ATCC BAA-1182) protein is 4-diphosphocytidyl-2-C-methyl-D-erythritol kinase.